The following is a 184-amino-acid chain: ADP-ribosylation factor-like protein 8c (184 aa).

Positions 1–18 (MGLWDSLLNWLRSLFFKQ) form an intramembrane region, note=Mediates targeting to membranes. GTP is bound by residues 29–34 (NAGKTS), 48–51 (MIPT), 70–74 (DLGGQ), and 129–132 (NKID).

Belongs to the small GTPase superfamily. Arf family. Interacts with tubulin.

The protein resides in the late endosome membrane. It is found in the lysosome membrane. The protein localises to the cytoplasm. Its subcellular location is the cytoskeleton. It localises to the spindle. In terms of biological role, may play a role in lysosome motility. May play a role in chromosome segregation. Functionally, (Microbial infection) Component of tomato mosaic virus (ToMV) RNA replication complexes. Required for tobamovirus multiplication, especially for efficient negative-strand RNA synthesis and viral RNA capping. The sequence is that of ADP-ribosylation factor-like protein 8c from Arabidopsis thaliana (Mouse-ear cress).